The sequence spans 86 residues: Mu-theraphotoxin-Hhn1d (86 aa).

A signal peptide spans 1-21 (MKASMFLALAGLALLFVVCYA). The propeptide occupies 22 to 49 (SESEEKEFSNELLSSVLAVDDNSKGEER). Cystine bridges form between Cys51/Cys66, Cys58/Cys73, and Cys65/Cys80. An Isoleucine amide modification is found at Ile84.

It belongs to the neurotoxin 10 (Hwtx-1) family. 22 (Htx-4) subfamily. Monomer. In terms of tissue distribution, expressed by the venom gland.

Its subcellular location is the secreted. In terms of biological role, neurotoxin. Selectively blocks neuronal tetrodotoxin-sensitive voltage-gated sodium channels (Nav). Does not affect tetrodotoxin-resistant voltage-gated sodium channels or calcium channels. This is Mu-theraphotoxin-Hhn1d from Cyriopagopus hainanus (Chinese bird spider).